A 309-amino-acid chain; its full sequence is 2-dehydro-3-deoxygluconokinase (309 aa).

Substrate-binding positions include 28–32 (GDTLN), Y88, 102–104 (YWR), and R170. Residues 168 to 170 (NYR), 228 to 233 (KRGADS), and 261 to 264 (AAGD) contribute to the ATP site. Residue D264 coordinates substrate. The Proton acceptor role is filled by D264.

It belongs to the carbohydrate kinase PfkB family.

The enzyme catalyses 2-dehydro-3-deoxy-D-gluconate + ATP = 2-dehydro-3-deoxy-6-phospho-D-gluconate + ADP + H(+). Its pathway is carbohydrate acid metabolism; 2-dehydro-3-deoxy-D-gluconate degradation; D-glyceraldehyde 3-phosphate and pyruvate from 2-dehydro-3-deoxy-D-gluconate: step 1/2. Its function is as follows. Catalyzes the phosphorylation of 2-keto-3-deoxygluconate (KDG) to produce 2-keto-3-deoxy-6-phosphogluconate (KDPG). This Escherichia coli (strain K12) protein is 2-dehydro-3-deoxygluconokinase (kdgK).